A 403-amino-acid chain; its full sequence is Argininosuccinate synthase (403 aa).

Residues 12-20 (AYSGGLDTS) and Ala-39 contribute to the ATP site. L-citrulline contacts are provided by Tyr-91 and Ser-96. ATP is bound at residue Gly-121. Positions 123, 127, and 128 each coordinate L-aspartate. Asn-127 is a binding site for L-citrulline. Positions 131, 180, 189, 265, and 277 each coordinate L-citrulline.

This sequence belongs to the argininosuccinate synthase family. Type 1 subfamily. Homotetramer.

The protein localises to the cytoplasm. It catalyses the reaction L-citrulline + L-aspartate + ATP = 2-(N(omega)-L-arginino)succinate + AMP + diphosphate + H(+). The protein operates within amino-acid biosynthesis; L-arginine biosynthesis; L-arginine from L-ornithine and carbamoyl phosphate: step 2/3. The polypeptide is Argininosuccinate synthase (Vibrio vulnificus (strain CMCP6)).